The primary structure comprises 466 residues: 3-isopropylmalate dehydratase large subunit (466 aa).

[4Fe-4S] cluster is bound by residues cysteine 347, cysteine 407, and cysteine 410.

It belongs to the aconitase/IPM isomerase family. LeuC type 1 subfamily. As to quaternary structure, heterodimer of LeuC and LeuD. [4Fe-4S] cluster serves as cofactor.

It carries out the reaction (2R,3S)-3-isopropylmalate = (2S)-2-isopropylmalate. Its pathway is amino-acid biosynthesis; L-leucine biosynthesis; L-leucine from 3-methyl-2-oxobutanoate: step 2/4. In terms of biological role, catalyzes the isomerization between 2-isopropylmalate and 3-isopropylmalate, via the formation of 2-isopropylmaleate. This chain is 3-isopropylmalate dehydratase large subunit, found in Blochmanniella floridana.